Consider the following 184-residue polypeptide: Thymidine kinase (184 aa).

Residues 15–22 and 89–92 contribute to the ATP site; these read GPMFSGKS and DEIQ. The active-site Proton acceptor is the Glu90. 4 residues coordinate Zn(2+): Cys146, Cys149, Cys178, and Cys181.

It belongs to the thymidine kinase family. As to quaternary structure, homotetramer.

Its subcellular location is the cytoplasm. It carries out the reaction thymidine + ATP = dTMP + ADP + H(+). This is Thymidine kinase from Mesomycoplasma hyopneumoniae (strain 232) (Mycoplasma hyopneumoniae).